The following is a 409-amino-acid chain: Protein naked cuticle homolog 2-like (409 aa).

Gly-2 carries N-myristoyl glycine lipidation. Residues 109 to 144 (AEDNRQEWVFTLYDFDNSGKVTKEDMSSLMHTIYDV) form the EF-hand domain. The Ca(2+) site is built by Asp-122, Asp-124, Ser-126, Lys-128, and Asp-133. Disordered regions lie at residues 166-224 (VTPE…YCVD), 243-315 (TSRF…RFPG), 346-367 (NHTHAHTPSGLQHSHSRRIRSR), and 388-409 (RHEHHHHHEHHHHHHYHHYHQT). Composition is skewed to basic and acidic residues over residues 171-185 (AARRRDATHTERETS) and 193-224 (VRSEEHRSADRRQSTHIRGQTEAHEGNHYCVD). The span at 247–268 (DSSSPDADQDPPSRSSHSQSRP) shows a compositional bias: low complexity. Positions 389 to 409 (HEHHHHHEHHHHHHYHHYHQT) are enriched in basic residues.

This sequence belongs to the NKD family.

The protein localises to the cell membrane. It is found in the cytoplasm. Cell autonomous antagonist of both the canonical and non-canonical Wnt signaling pathways. The protein is Protein naked cuticle homolog 2-like (nkd2l) of Danio rerio (Zebrafish).